The chain runs to 238 residues: Nucleoside diphosphate kinase III, chloroplastic/mitochondrial (238 aa).

Residues 1–85 (MSSQICRSAS…YMIQDQEVLA (85 aa)) constitute a chloroplast and mitochondrion transit peptide. K96, F144, R172, T178, R189, and N199 together coordinate ATP. H202 acts as the Pros-phosphohistidine intermediate in catalysis.

It belongs to the NDK family. Homohexamer. It depends on Mg(2+) as a cofactor.

It is found in the plastid. It localises to the chloroplast thylakoid lumen. Its subcellular location is the mitochondrion intermembrane space. It carries out the reaction a 2'-deoxyribonucleoside 5'-diphosphate + ATP = a 2'-deoxyribonucleoside 5'-triphosphate + ADP. It catalyses the reaction a ribonucleoside 5'-diphosphate + ATP = a ribonucleoside 5'-triphosphate + ADP. Its function is as follows. Major role in the synthesis of nucleoside triphosphates other than ATP. The ATP gamma phosphate is transferred to the NDP beta phosphate via a ping-pong mechanism, using a phosphorylated active-site intermediate. Shows the highest specificity towards GDP. This chain is Nucleoside diphosphate kinase III, chloroplastic/mitochondrial (NDPK3), found in Arabidopsis thaliana (Mouse-ear cress).